Here is a 62-residue protein sequence, read N- to C-terminus: Pro-MCH variant (62 aa).

Residues 23–41 (GSVAFPAENGVQDTESTQE) are NGE-like. The interval 29–62 (AENGVQDTESTQEKRETGDEENSAKFPIGRRDFD) is disordered. Residues 44–56 (ETGDEENSAKFPI) are NEI-like. A melanin-concentrating hormone-like region spans residues 60–62 (DFD).

Belongs to the melanin-concentrating hormone family.

This chain is Pro-MCH variant (PMCHL1), found in Pan paniscus (Pygmy chimpanzee).